The following is a 690-amino-acid chain: Eukaryotic translation initiation factor 3 subunit B (690 aa).

The segment at Met-1–Asp-37 is disordered. Acidic residues predominate over residues Asn-15–Phe-25. Residues Ser-57 to Asp-141 form the RRM domain. 5 WD repeats span residues Thr-207–Lys-246, Asp-293–Leu-331, Ile-334–Glu-369, Glu-442–Leu-484, and Pro-530–Thr-575. A coiled-coil region spans residues Glu-595–Arg-645.

Belongs to the eIF-3 subunit B family. In terms of assembly, component of the eukaryotic translation initiation factor 3 (eIF-3) complex. The eIF-3 complex interacts with pix. Interacts with mxt.

The protein resides in the cytoplasm. RNA-binding component of the eukaryotic translation initiation factor 3 (eIF-3) complex, which is involved in protein synthesis of a specialized repertoire of mRNAs and, together with other initiation factors, stimulates binding of mRNA and methionyl-tRNAi to the 40S ribosome. The eIF-3 complex specifically targets and initiates translation of a subset of mRNAs involved in cell proliferation. In Drosophila sechellia (Fruit fly), this protein is Eukaryotic translation initiation factor 3 subunit B.